Consider the following 559-residue polypeptide: Formate--tetrahydrofolate ligase (559 aa).

Threonine 68–serine 75 lines the ATP pocket.

This sequence belongs to the formate--tetrahydrofolate ligase family.

The enzyme catalyses (6S)-5,6,7,8-tetrahydrofolate + formate + ATP = (6R)-10-formyltetrahydrofolate + ADP + phosphate. Its pathway is one-carbon metabolism; tetrahydrofolate interconversion. The polypeptide is Formate--tetrahydrofolate ligase (Clostridium tetani (strain Massachusetts / E88)).